The primary structure comprises 216 residues: Peroxiredoxin (216 aa).

In terms of domain architecture, Thioredoxin spans 2–158 (IVIGEKFPEV…ILRLVKALKI (157 aa)). C46 (cysteine sulfenic acid (-SOH) intermediate) is an active-site residue. R121 contributes to the substrate binding site. C205 and C211 are joined by a disulfide.

It belongs to the peroxiredoxin family. Prx6 subfamily. Homodecamer. Pentamer of dimers that assemble into a ring structure.

The protein resides in the cytoplasm. It catalyses the reaction a hydroperoxide + [thioredoxin]-dithiol = an alcohol + [thioredoxin]-disulfide + H2O. Functionally, thiol-specific peroxidase that catalyzes the reduction of hydrogen peroxide and organic hydroperoxides to water and alcohols, respectively. Plays a role in cell protection against oxidative stress by detoxifying peroxides. The polypeptide is Peroxiredoxin (Pyrococcus furiosus (strain ATCC 43587 / DSM 3638 / JCM 8422 / Vc1)).